The following is a 434-amino-acid chain: Histidinol dehydrogenase (434 aa).

Residues tyrosine 130, glutamine 188, and asparagine 211 each coordinate NAD(+). Substrate-binding residues include serine 237, glutamine 259, and histidine 262. 2 residues coordinate Zn(2+): glutamine 259 and histidine 262. Catalysis depends on proton acceptor residues glutamate 326 and histidine 327. Substrate contacts are provided by histidine 327, aspartate 360, glutamate 414, and histidine 419. Aspartate 360 contributes to the Zn(2+) binding site. Histidine 419 is a Zn(2+) binding site.

Belongs to the histidinol dehydrogenase family. Homodimer. The cofactor is Zn(2+).

The enzyme catalyses L-histidinol + 2 NAD(+) + H2O = L-histidine + 2 NADH + 3 H(+). It functions in the pathway amino-acid biosynthesis; L-histidine biosynthesis; L-histidine from 5-phospho-alpha-D-ribose 1-diphosphate: step 9/9. Catalyzes the sequential NAD-dependent oxidations of L-histidinol to L-histidinaldehyde and then to L-histidine. This is Histidinol dehydrogenase from Shigella sonnei (strain Ss046).